Here is a 158-residue protein sequence, read N- to C-terminus: Protein shisa-like-2B (158 aa).

A helical transmembrane segment spans residues 65-85 (IGALVGLGIAALVLLAFVISV).

This sequence belongs to the shisa family.

The protein resides in the membrane. The protein is Protein shisa-like-2B (Shisal2b) of Mus musculus (Mouse).